A 1407-amino-acid polypeptide reads, in one-letter code: E3 ubiquitin-protein ligase linker protein MMS1 (1407 aa).

The tract at residues 1–600 (MLGLRTHGLD…QFQIFRHLRI (600 aa)) is required for interaction with MMS22. Residue T1294 is modified to Phosphothreonine.

As to quaternary structure, component of multiple cullin-RING ligases (CRLs) composed of 4 subunits: the RING protein HRT1, the cullin RTT101, a linker protein MMS1, and one of many alternative substrate receptors belonging to a protein family described as DCAF (DDB1- and CUL4-associated factor). Component of a RTT101(MMS1-MMS22) complex with the substrate receptor MMS22. This complex further interacts with RTT107 and CTF4 to form RTT101-MMS1-MMS22-RTT107 and RTT101-MMS1-MMS22-CTF4 complexes respectively. Component of a RTT101(MSS1-CRT10) complex with the substrate receptor CRT10. Component of a RTT101(MSS1-ESC2) complex with the potential substrate receptor ESC2. Component of a RTT101(MSS1-ORC5) complex with the potential substrate receptor ORC5. Interacts with RTT101 (via N-ter). Interacts (via N-ter) with MMS22 (via C-ter). Interacts with CRT10.

It is found in the nucleus. Component of multiple cullin-RING-based E3 ubiquitin-protein ligase complexes (CRLs), which mediate the ubiquitination of target proteins. The CRL associates with CDC34 as the E2 ubiquitin-conjugating enzyme. The functional specificity of the CRL depends on the type of the associated substrate receptor protein. RTT101(MMS1-MMS22) promotes fork progression through damaged DNA or natural pause sites by stabilizing replication proteins like the replication fork-pausing complex (FPC) and leading-strand polymerase at stalled replication forks. RTT101(MMS1-MMS22) ubiquitinates the acetylated histones H3K56ac-H4 at lysine residues H3K121, H3K122 and H3K125. Ubiquitination is required for efficient histone deposition during replication-coupled nucleosome assembly, probably by facilitating the transfer of H3-H4 from ASF1 to other chaperones involved in histone deposition. RTT101(MMS1-CRT10) may regulate nucleotide synthesis through transcriptional regulation of ribonucleotide reductase. RTT101(MMS1) is also involved in the non-functional rRNA decay (NRD) of 25S rRNA through the selective, ubiquitination-dependent degradation of nonfunctional ribosomal particles. Involved in the regulation of TY1 transposition. The sequence is that of E3 ubiquitin-protein ligase linker protein MMS1 (MMS1) from Saccharomyces cerevisiae (strain ATCC 204508 / S288c) (Baker's yeast).